Here is an 80-residue protein sequence, read N- to C-terminus: Anaphase-promoting complex subunit hcn1 (80 aa).

At Met1 the chain carries N-acetylmethionine. Residues 26-54 are disordered; it reads QTLDSESTTEEALQKNEESTRLSPEKKKI. The segment covering 37 to 54 has biased composition (basic and acidic residues); that stretch reads ALQKNEESTRLSPEKKKI.

The APC/C is composed of at least 13 subunits: apc1, apc2, nuc2, apc4, apc5, cut9, apc8, apc10, apc11, hcn1, apc13, apc14 and apc15. Interacts directly (via N-terminus) with cut9.

Component of the anaphase promoting complex/cyclosome (APC/C), a cell cycle-regulated E3 ubiquitin-protein ligase complex that controls progression through mitosis and the G1 phase of the cell cycle. The APC/C is thought to confer substrate specificity and, in the presence of ubiquitin-conjugating E2 enzymes, it catalyzes the formation of protein-ubiquitin conjugates that are subsequently degraded by the 26S proteasome. Has a role in assembling cut9 in the 20S APC/cyclosome. The sequence is that of Anaphase-promoting complex subunit hcn1 (hcn1) from Schizosaccharomyces pombe (strain 972 / ATCC 24843) (Fission yeast).